A 188-amino-acid chain; its full sequence is V-type ATP synthase subunit E (188 aa).

It belongs to the V-ATPase E subunit family.

Produces ATP from ADP in the presence of a proton gradient across the membrane. The polypeptide is V-type ATP synthase subunit E (atpE) (Thermus thermophilus (strain ATCC 27634 / DSM 579 / HB8)).